The primary structure comprises 123 residues: Large ribosomal subunit protein bL21 (123 aa).

Belongs to the bacterial ribosomal protein bL21 family. Part of the 50S ribosomal subunit. Contacts protein L20.

Its function is as follows. This protein binds to 23S rRNA in the presence of protein L20. This Rhizobium meliloti (strain 1021) (Ensifer meliloti) protein is Large ribosomal subunit protein bL21.